A 630-amino-acid polypeptide reads, in one-letter code: tRNA uridine 5-carboxymethylaminomethyl modification enzyme MnmG (630 aa).

Gly-13–Gly-18 is a binding site for FAD. Position 273–287 (Gly-273–Phe-287) interacts with NAD(+).

It belongs to the MnmG family. Homodimer. Heterotetramer of two MnmE and two MnmG subunits. FAD serves as cofactor.

It localises to the cytoplasm. Functionally, NAD-binding protein involved in the addition of a carboxymethylaminomethyl (cmnm) group at the wobble position (U34) of certain tRNAs, forming tRNA-cmnm(5)s(2)U34. This Actinobacillus pleuropneumoniae serotype 7 (strain AP76) protein is tRNA uridine 5-carboxymethylaminomethyl modification enzyme MnmG.